A 299-amino-acid polypeptide reads, in one-letter code: Transcription factor MYB17 (299 aa).

HTH myb-type domains follow at residues Lys-9 to Leu-61 and Arg-62 to Leu-116. DNA-binding regions (H-T-H motif) lie at residues Trp-37 to Leu-61 and Trp-89 to Leu-112.

As to quaternary structure, interacts with LFY. In terms of tissue distribution, expressed in the shoot apex, young flower buds, developing carpels and siliques. Expressed in floral meristem, initiating floral primordia and developing flowers.

Its subcellular location is the nucleus. Transcription factor that may play a role in flower development by repressing ANT. Regulates the transition of meristem identity from vegetative growth to flowering. Acts downstream of LFY and upstream of AP1. Directly activates AP1 to promote floral fate. Together with LFY and AP1 may constitute a regulatory network that contributes to an abrupt and robust meristem identity transition. This chain is Transcription factor MYB17, found in Arabidopsis thaliana (Mouse-ear cress).